Consider the following 596-residue polypeptide: MKHIRNFSIIAHIDHGKSTLSDRLIHECGGLTDREMAAQVLDSMDIERERGITIKAQSVTLDYKANDGETYQLNFIDTPGHVDFSYEVSRSLAACEGALLVVDAGQGVEAQTLANCYTALEMDMDVVPVLNKIDLPQADPDRVAEEIEDIVGIEAADAVRCSAKTGVGIKDVLEVIVEQIPPPEGDEEGPLQALIIDSWFDSYLGVVSLVRIKNGVLKKGDKFKVMSTGQNHTADRVGIFTPKQTDTPELKTGEVGFVIAGIKEIHGAPVGDTLTHAKHGALEPLPGFKKVKPQVYAGLFPISTDDYESFRDALNKLSLNDASLFFEPETSSALGFGFRIGFLGLLHMEIIQERLEREYNLELITTAPTVVYEIVQTNGETIYVDNPSDLPAINNIEEMREPIVETNILVPKEYLGNVITLCVEKRGVQTNLVYHGNQVALTYELPMAEVVMDFFDRLKSTSRGYASLEYNFVRFEPADMVRLDILINGDRVDALAMIIHKGLIRSKGLALVNKMKELIPRQMFDIAVQAAVGSQIIARSSIKAMRKDVTAKCYGGDVSRKKKLLQKQKDGKKRMKQVGNVEVPQEAFLAVLKLND.

The tr-type G domain occupies K2 to E184. GTP-binding positions include D14 to T19 and N131 to D134.

Belongs to the TRAFAC class translation factor GTPase superfamily. Classic translation factor GTPase family. LepA subfamily.

It localises to the cell inner membrane. It catalyses the reaction GTP + H2O = GDP + phosphate + H(+). Required for accurate and efficient protein synthesis under certain stress conditions. May act as a fidelity factor of the translation reaction, by catalyzing a one-codon backward translocation of tRNAs on improperly translocated ribosomes. Back-translocation proceeds from a post-translocation (POST) complex to a pre-translocation (PRE) complex, thus giving elongation factor G a second chance to translocate the tRNAs correctly. Binds to ribosomes in a GTP-dependent manner. This Shewanella piezotolerans (strain WP3 / JCM 13877) protein is Elongation factor 4.